Consider the following 374-residue polypeptide: Pectate lyase 2 (374 aa).

The signal sequence occupies residues 1-22; that stretch reads MKYLLPTAAAGLLLLAAQPAMA. Cysteines 93 and 176 form a disulfide. Residues Asp-150, Asp-152, Glu-187, and Asp-191 each contribute to the Ca(2+) site. The active site involves Arg-239. A disulfide bridge connects residues Cys-350 and Cys-373.

The protein belongs to the polysaccharide lyase 1 family. PLADES subfamily. Ca(2+) serves as cofactor.

Its subcellular location is the secreted. It catalyses the reaction Eliminative cleavage of (1-&gt;4)-alpha-D-galacturonan to give oligosaccharides with 4-deoxy-alpha-D-galact-4-enuronosyl groups at their non-reducing ends.. The protein operates within glycan metabolism; pectin degradation; 2-dehydro-3-deoxy-D-gluconate from pectin: step 2/5. In terms of biological role, involved in maceration and soft-rotting of plant tissue. This Pectobacterium carotovorum (Erwinia carotovora) protein is Pectate lyase 2 (pel2).